A 350-amino-acid polypeptide reads, in one-letter code: Phosphotriesterase-related protein (350 aa).

Positions 22, 24, 169, 201, 230, and 298 each coordinate a divalent metal cation.

It belongs to the metallo-dependent hydrolases superfamily. Phosphotriesterase family. A divalent metal cation is required as a cofactor.

The chain is Phosphotriesterase-related protein from Drosophila willistoni (Fruit fly).